Reading from the N-terminus, the 467-residue chain is UDP-N-acetylmuramate--L-alanine ligase (467 aa).

112-118 (GTHGKTT) serves as a coordination point for ATP.

It belongs to the MurCDEF family.

It localises to the cytoplasm. The enzyme catalyses UDP-N-acetyl-alpha-D-muramate + L-alanine + ATP = UDP-N-acetyl-alpha-D-muramoyl-L-alanine + ADP + phosphate + H(+). The protein operates within cell wall biogenesis; peptidoglycan biosynthesis. Its function is as follows. Cell wall formation. The sequence is that of UDP-N-acetylmuramate--L-alanine ligase from Azoarcus sp. (strain BH72).